The chain runs to 212 residues: Superoxide dismutase [Fe] 1, chloroplastic (212 aa).

Ala-2 carries the N-acetylalanine modification. Positions 35, 87, 169, and 173 each coordinate Fe cation.

Belongs to the iron/manganese superoxide dismutase family. As to quaternary structure, homodimer. Interacts with cpn20/cpn21. Requires Fe cation as cofactor.

The protein localises to the cell membrane. The protein resides in the plastid. Its subcellular location is the chloroplast membrane. It localises to the chloroplast stroma. It carries out the reaction 2 superoxide + 2 H(+) = H2O2 + O2. With respect to regulation, activated by cpn20/cpn21. In terms of biological role, destroys superoxide anion radicals which are normally produced within the cells and which are toxic to biological systems. The protein is Superoxide dismutase [Fe] 1, chloroplastic (FSD1) of Arabidopsis thaliana (Mouse-ear cress).